The primary structure comprises 57 residues: Alpha-conotoxin-like Sm1.2 (57 aa).

A signal peptide spans 1-16; it reads MFTVFLLVVLATTVVS. Residues 17–42 constitute a propeptide that is removed on maturation; it reads FPSDRESDGANDEARTDEPEEHGPDR. The disordered stretch occupies residues 17 to 46; sequence FPSDRESDGANDEARTDEPEEHGPDRNGCC. Basic and acidic residues predominate over residues 19–41; it reads SDRESDGANDEARTDEPEEHGPD. 2 disulfide bridges follow: Cys45-Cys51 and Cys46-Cys56. Position 56 is a cysteine amide (Cys56).

It belongs to the conotoxin A superfamily. As to expression, expressed by the venom duct.

The protein resides in the secreted. Alpha-conotoxins act on postsynaptic membranes, they bind to the nicotinic acetylcholine receptors (nAChR) and thus inhibit them. In Conus stercusmuscarum (Fly-specked cone), this protein is Alpha-conotoxin-like Sm1.2.